Reading from the N-terminus, the 379-residue chain is Probable RNA 3'-terminal phosphate cyclase-like protein (379 aa).

Belongs to the RNA 3'-terminal cyclase family. Type 2 subfamily. Part of the small subunit (SSU) processome, composed of more than 70 proteins and the RNA chaperone small nucleolar RNA (snoRNA) U3.

It localises to the nucleus. The protein resides in the nucleolus. Functionally, part of the small subunit (SSU) processome, first precursor of the small eukaryotic ribosomal subunit. During the assembly of the SSU processome in the nucleolus, many ribosome biogenesis factors, an RNA chaperone and ribosomal proteins associate with the nascent pre-rRNA and work in concert to generate RNA folding, modifications, rearrangements and cleavage as well as targeted degradation of pre-ribosomal RNA by the RNA exosome. Does not have cyclase activity. In Caenorhabditis elegans, this protein is Probable RNA 3'-terminal phosphate cyclase-like protein.